Reading from the N-terminus, the 229-residue chain is 2-C-methyl-D-erythritol 4-phosphate cytidylyltransferase (229 aa).

Belongs to the IspD/TarI cytidylyltransferase family. IspD subfamily.

It carries out the reaction 2-C-methyl-D-erythritol 4-phosphate + CTP + H(+) = 4-CDP-2-C-methyl-D-erythritol + diphosphate. Its pathway is isoprenoid biosynthesis; isopentenyl diphosphate biosynthesis via DXP pathway; isopentenyl diphosphate from 1-deoxy-D-xylulose 5-phosphate: step 2/6. Functionally, catalyzes the formation of 4-diphosphocytidyl-2-C-methyl-D-erythritol from CTP and 2-C-methyl-D-erythritol 4-phosphate (MEP). This Clostridium botulinum (strain 657 / Type Ba4) protein is 2-C-methyl-D-erythritol 4-phosphate cytidylyltransferase.